The chain runs to 372 residues: Ca(2+)/H(+) antiporter (372 aa).

11 consecutive transmembrane segments (helical) span residues 7–27, 29–49, 62–82, 94–114, 134–154, 162–182, 222–242, 251–271, 294–314, 320–340, and 352–372; these read IFLV…LGWG, TTVF…MGTA, GGLL…YIAL, LTGS…FLGG, MNLG…STGV, LSVA…VFSM, LWTG…ELLV, SLGL…GNAA, GSSL…GWAI, LNFN…VNSI, and ILLL…PTLV.

Belongs to the Ca(2+):cation antiporter (CaCA) (TC 2.A.19) family. Cation/proton exchanger (CAX) subfamily.

The protein resides in the cell inner membrane. In terms of biological role, ca(+)/H(+) antiporter that extrudes calcium in exchange for external protons. Plays an important role in salt tolerance. Does not transport sodium or lithium. The polypeptide is Ca(2+)/H(+) antiporter (Synechocystis sp. (strain ATCC 27184 / PCC 6803 / Kazusa)).